Here is a 75-residue protein sequence, read N- to C-terminus: Small capsomere-interacting protein (75 aa).

It belongs to the herpesviridae small capsomere-interacting protein family. In terms of assembly, interacts with the major capsid protein/MCP.

The protein resides in the virion. The protein localises to the host nucleus. Its function is as follows. Participates in the assembly of the infectious particles by decorating the outer surface of the capsid shell and thus forming a layer between the capsid and the tegument. Complexes composed of the capsid protein VP5 and UL48A assemble together in the host cytoplasm and are translocated to the nucleus, where they accumulate and participate in capsid assembly. Functionally, participates in the assembly of the infectious particles by decorating the outer surface of the capsid shell and thus forming a layer between the capsid and the tegument. Complexes composed of the major capsid protein and small capsomere-interacting protein/SCP assemble together in the host cytoplasm and are translocated to the nucleus, where they accumulate and participate in capsid assembly. The polypeptide is Small capsomere-interacting protein (Homo sapiens (Human)).